The primary structure comprises 311 residues: T-cell acute lymphocytic leukemia protein 1 homolog (311 aa).

Pro residues predominate over residues 1–14 (MTMDRPPAPPPPSS). The disordered stretch occupies residues 1–67 (MTMDRPPAPP…RPSPGPPAAA (67 aa)). Residues 15–25 (DPRDARRHDPE) show a composition bias toward basic and acidic residues. In terms of domain architecture, bHLH spans 179–231 (VRRIFTNSRERWRQQNVNGAFAELRKLIPTHPPDKKLSKNEILRLAMKYINFL). The tract at residues 265-311 (SPNSSCGSSLDGAASPDSFTEEHDTLDSKHARNLHHAILPVEGSAQR) is disordered. The span at 284 to 294 (TEEHDTLDSKH) shows a compositional bias: basic and acidic residues.

As to quaternary structure, efficient DNA binding requires dimerization with another bHLH protein. Forms heterodimers with TCF3. In terms of processing, phosphorylated on serine residues.

The protein localises to the nucleus. Implicated in the genesis of hemopoietic malignancies. It may play an important role in hemopoietic differentiation. This Gallus gallus (Chicken) protein is T-cell acute lymphocytic leukemia protein 1 homolog (TAL1).